The following is an 85-amino-acid chain: Large ribosomal subunit protein bL31 (85 aa).

Residues 65–85 (YGMGGAGKAGEDKKAGDKADA) are disordered. Positions 73–85 (AGEDKKAGDKADA) are enriched in basic and acidic residues.

The protein belongs to the bacterial ribosomal protein bL31 family. Type A subfamily. In terms of assembly, part of the 50S ribosomal subunit.

In terms of biological role, binds the 23S rRNA. This Synechococcus sp. (strain WH7803) protein is Large ribosomal subunit protein bL31.